The primary structure comprises 443 residues: Tol-Pal system protein TolB (443 aa).

Positions 1–33 (MKIGIINTKIRTVFSAFACMIAASLVCTMPARA) are cleaved as a signal peptide.

Belongs to the TolB family. As to quaternary structure, the Tol-Pal system is composed of five core proteins: the inner membrane proteins TolA, TolQ and TolR, the periplasmic protein TolB and the outer membrane protein Pal. They form a network linking the inner and outer membranes and the peptidoglycan layer.

It is found in the periplasm. Part of the Tol-Pal system, which plays a role in outer membrane invagination during cell division and is important for maintaining outer membrane integrity. The protein is Tol-Pal system protein TolB of Brucella abortus (strain S19).